The chain runs to 89 residues: GTP cyclohydrolase 1 feedback regulatory protein (89 aa).

It belongs to the GFRP family. Homopentamer. Forms a complex with GCH1 where a GCH1 homodecamer is sandwiched by two GFRP homopentamers.

It localises to the nucleus. Its subcellular location is the nucleus membrane. It is found in the cytoplasm. The protein resides in the cytosol. Its function is as follows. Mediates tetrahydrobiopterin inhibition of GTP cyclohydrolase 1. The protein is GTP cyclohydrolase 1 feedback regulatory protein (gchfr) of Danio rerio (Zebrafish).